The chain runs to 223 residues: N-terminal Xaa-Pro-Lys N-methyltransferase 1 (223 aa).

Position 1 is an N-acetylmethionine (Met1). The residue at position 2 (Thr2) is an N-acetylthreonine; in N-terminal Xaa-Pro-Lys N-methyltransferase 1, N-terminally processed. S-adenosyl-L-methionine is bound by residues Gly69, Arg74, 91–93 (DVT), 119–120 (LQ), and Gln135.

Belongs to the methyltransferase superfamily. NTM1 family.

It localises to the nucleus. The enzyme catalyses N-terminal L-alanyl-L-prolyl-L-lysyl-[protein] + 3 S-adenosyl-L-methionine = N-terminal N,N,N-trimethyl-L-alanyl-L-prolyl-L-lysyl-[protein] + 3 S-adenosyl-L-homocysteine + 3 H(+). It carries out the reaction N-terminal L-seryl-L-prolyl-L-lysyl-[protein] + 3 S-adenosyl-L-methionine = N-terminal N,N,N-trimethyl-L-seryl-L-prolyl-L-lysyl-[protein] + 3 S-adenosyl-L-homocysteine + 3 H(+). The catalysed reaction is N-terminal L-prolyl-L-prolyl-L-lysyl-[protein] + 2 S-adenosyl-L-methionine = N-terminal N,N-dimethyl-L-prolyl-L-prolyl-L-lysyl-[protein] + 2 S-adenosyl-L-homocysteine + 2 H(+). Its function is as follows. Distributive alpha-N-methyltransferase that methylates the N-terminus of target proteins containing the N-terminal motif [Ala/Gly/Pro/Ser]-Pro-Lys when the initiator Met is cleaved. Specifically catalyzes mono-, di- or tri-methylation of the exposed alpha-amino group of the Ala, Gly or Ser residue in the [Ala/Gly/Ser]-Pro-Lys motif and mono- or di-methylation of Pro in the Pro-Pro-Lys motif. Some of the substrates may be primed by NTMT2-mediated monomethylation. Catalyzes the trimethylation of the N-terminal Gly in CENPA (after removal of Met-1). Responsible for the N-terminal methylation of KLHL31, MYL2, MYL3, RB1, RCC1, RPL23A and SET. Required during mitosis for normal bipolar spindle formation and chromosome segregation via its action on RCC1. This is N-terminal Xaa-Pro-Lys N-methyltransferase 1 (NTMT1) from Ailuropoda melanoleuca (Giant panda).